Consider the following 721-residue polypeptide: 1,4-alpha-glucan branching enzyme GlgB (721 aa).

Residue aspartate 404 is the Nucleophile of the active site. Glutamate 457 serves as the catalytic Proton donor.

It belongs to the glycosyl hydrolase 13 family. GlgB subfamily. In terms of assembly, monomer.

The catalysed reaction is Transfers a segment of a (1-&gt;4)-alpha-D-glucan chain to a primary hydroxy group in a similar glucan chain.. The protein operates within glycan biosynthesis; glycogen biosynthesis. Its function is as follows. Catalyzes the formation of the alpha-1,6-glucosidic linkages in glycogen by scission of a 1,4-alpha-linked oligosaccharide from growing alpha-1,4-glucan chains and the subsequent attachment of the oligosaccharide to the alpha-1,6 position. The chain is 1,4-alpha-glucan branching enzyme GlgB from Novosphingobium aromaticivorans (strain ATCC 700278 / DSM 12444 / CCUG 56034 / CIP 105152 / NBRC 16084 / F199).